The sequence spans 199 residues: MRPPRCVGRTQGIPLGLLAFWVATARCLQSQGVSLYIPRSAINATVQEDILLSVDYICHGVPTIEWEYTPNWGVQKIVEWKPGTPANVSQSHRDRVCTFDNGSIQLFSVGVRDSGYYVITVTEHPGSSQSGTILLHVSEIRYEDLHFVAVFFALLAAVAVVLISLMWVCNQCAYKFQRKRRYKLRESTTEEIEMKDVEC.

Residues 1 to 27 (MRPPRCVGRTQGIPLGLLAFWVATARC) form the signal peptide. At 28–146 (LQSQGVSLYI…VSEIRYEDLH (119 aa)) the chain is on the extracellular side. Residues 36–138 (YIPRSAINAT…QSGTILLHVS (103 aa)) form the Ig-like C2-type domain. 3 N-linked (GlcNAc...) asparagine glycosylation sites follow: Asn43, Asn87, and Asn101. The helical transmembrane segment at 147-167 (FVAVFFALLAAVAVVLISLMW) threads the bilayer. At 168 to 199 (VCNQCAYKFQRKRRYKLRESTTEEIEMKDVEC) the chain is on the cytoplasmic side. Positions 169–185 (CNQCAYKFQRKRRYKLR) are important for CDC42-dependent filopodia induction.

Can homooligomerize through cis interactions within the same cell membrane. In terms of processing, N-glycosylated.

Its subcellular location is the cell membrane. The protein resides in the cell projection. It localises to the dendrite. It is found in the axon. Its function is as follows. Cell adhesion-like membrane protein of the central nervous system (CNS) which modulates both the position and complexity of central neurons by altering their membrane morphology and dynamics. Involved in the formation of neuronal dendrites and protrusions including dendritic filopodia. In synaptogenesis, regulates synapse formation by altering dendritic spine morphology and actin distribution. Promotes formation of unstable neuronal spines such as thin and branched types. Regulates neuronal morphogenesis and migration during cortical development in the brain. The chain is V-set and transmembrane domain-containing protein 5 (Vstm5) from Rattus norvegicus (Rat).